A 141-amino-acid polypeptide reads, in one-letter code: Large ribosomal subunit protein uL11 (141 aa).

It belongs to the universal ribosomal protein uL11 family. Part of the ribosomal stalk of the 50S ribosomal subunit. Interacts with L10 and the large rRNA to form the base of the stalk. L10 forms an elongated spine to which L12 dimers bind in a sequential fashion forming a multimeric L10(L12)X complex. One or more lysine residues are methylated.

In terms of biological role, forms part of the ribosomal stalk which helps the ribosome interact with GTP-bound translation factors. This is Large ribosomal subunit protein uL11 from Pseudothermotoga lettingae (strain ATCC BAA-301 / DSM 14385 / NBRC 107922 / TMO) (Thermotoga lettingae).